A 574-amino-acid polypeptide reads, in one-letter code: Sulfate adenylyltransferase (574 aa).

The tract at residues 1–170 (MANTPHGGVL…LEAINRLEHY (170 aa)) is N-terminal. A catalytic region spans residues 171 to 395 (DFLDLRFTPS…LREENPLPAE (225 aa)). Q198 is a binding site for sulfate. Residues 198–201 (QTRN) and 292–295 (GRDH) each bind ATP. Catalysis depends on residues T199, R200, and N201. R200 is a binding site for sulfate. A296 contacts sulfate. M334 is a binding site for ATP. Residues 396 to 574 (KGFTVFMTGY…LESNGLLDRL (179 aa)) form an allosteric regulation domain; adenylyl-sulfate kinase-like region. 3'-phosphoadenylyl sulfate contacts are provided by residues 435–438 (ENVR), R452, 478–479 (IA), and K516.

This sequence in the N-terminal section; belongs to the sulfate adenylyltransferase family. It in the C-terminal section; belongs to the APS kinase family. In terms of assembly, homohexamer. Dimer of trimers.

It localises to the cytoplasm. The enzyme catalyses sulfate + ATP + H(+) = adenosine 5'-phosphosulfate + diphosphate. The protein operates within sulfur metabolism; hydrogen sulfide biosynthesis; sulfite from sulfate: step 1/3. Allosterically inhibited by 3'-phosphoadenosine 5'-phosphosulfate (PAPS). Its function is as follows. Catalyzes the first intracellular reaction of sulfate assimilation, forming adenosine-5'-phosphosulfate (APS) from inorganic sulfate and ATP. Plays an important role in sulfate activation as a component of the biosynthesis pathway of sulfur-containing amino acids. The polypeptide is Sulfate adenylyltransferase (Gibberella zeae (strain ATCC MYA-4620 / CBS 123657 / FGSC 9075 / NRRL 31084 / PH-1) (Wheat head blight fungus)).